Reading from the N-terminus, the 265-residue chain is MKRIFVQNRELVVPGTLLAQGPYKNGRGTFREGSRIYSTVIGLVDIKGNTIRVIPLEGPYIPEVGDNVIGKIVDVKFSSWVVDIGAPYPANLKIQDFTDEKIDLLRTDLRKFFDIGDIIYAKVKAITEVNNIDLTTKGMPFNGGPLKGGQIVKITPSRVPRVIGRGGSMINMIKKLTMTRIIVGQNGWIWVSGKNDALEKLAIEAILKIDKESHTRGLTDRIKALLLSRLQELKEKGVIEEIPKLEEEPQGEDEVNGNDGEARGA.

Residues 65-137 (GDNVIGKIVD…EVNNIDLTTK (73 aa)) enclose the S1 motif domain. A KH domain is found at 147–205 (KGGQIVKITPSRVPRVIGRGGSMINMIKKLTMTRIIVGQNGWIWVSGKNDALEKLAIEA). The disordered stretch occupies residues 241–265 (EIPKLEEEPQGEDEVNGNDGEARGA).

The protein belongs to the RRP4 family. Component of the archaeal exosome complex. Forms a trimer of Rrp4 and/or Csl4 subunits. The trimer associates with a hexameric ring-like arrangement composed of 3 Rrp41-Rrp42 heterodimers.

It localises to the cytoplasm. Non-catalytic component of the exosome, which is a complex involved in RNA degradation. Increases the RNA binding and the efficiency of RNA degradation. Confers strong poly(A) specificity to the exosome. The chain is Exosome complex component Rrp4 from Pyrococcus abyssi (strain GE5 / Orsay).